The following is a 55-amino-acid chain: Large ribosomal subunit protein bL33 (55 aa).

This sequence belongs to the bacterial ribosomal protein bL33 family.

In Sinorhizobium fredii (strain NBRC 101917 / NGR234), this protein is Large ribosomal subunit protein bL33.